Consider the following 134-residue polypeptide: Large ribosomal subunit protein bL20 (134 aa).

It belongs to the bacterial ribosomal protein bL20 family.

Functionally, binds directly to 23S ribosomal RNA and is necessary for the in vitro assembly process of the 50S ribosomal subunit. It is not involved in the protein synthesizing functions of that subunit. The sequence is that of Large ribosomal subunit protein bL20 from Rhizobium meliloti (strain 1021) (Ensifer meliloti).